The sequence spans 132 residues: Histone H2A.1 (132 aa).

Residue serine 2 is modified to N-acetylserine. Residues lysine 5 and lysine 8 each carry the N6-acetyllysine modification. N6-succinyllysine is present on residues lysine 14 and lysine 22. The residue at position 106 (glutamine 106) is an N5-methylglutamine. Lysine 120 carries the N6-malonyllysine; alternate modification. Lysine 127 is covalently cross-linked (Glycyl lysine isopeptide (Lys-Gly) (interchain with G-Cter in SUMO)). Position 129 is a phosphoserine (serine 129). A [ST]-Q motif motif is present at residues 129 to 130 (SQ).

This sequence belongs to the histone H2A family. As to quaternary structure, the nucleosome is a histone octamer containing two molecules each of H2A, H2B, H3 and H4 assembled in one H3-H4 heterotetramer and two H2A-H2B heterodimers. The octamer wraps approximately 147 bp of DNA. Phosphorylated to form H2AS128ph (gamma-H2A) in response to DNA double-strand breaks (DSBs) generated by exogenous genotoxic agents and by stalled replication forks. Phosphorylation is dependent on the DNA damage checkpoint kinases MEC1/ATR and TEL1/ATM, spreads on either side of a detected DSB site and may mark the surrounding chromatin for recruitment of proteins required for DNA damage signaling and repair. Gamma-H2A interacts with ARP4, a shared component of the NuA4 histone acetyltransferase complex and the INO80 and SWR1 chromatin remodeling complexes, and serves to recruit first NuA4, mediating histone H4 acetylation, and subsequently the INO80/SWR1 complexes, facilitating DNA resection, to DSB sites. Gamma-H2A is required for sequestering cohesin around the break site, which is important for efficient post-replicative double-strand break repair by homologous recombination, holding the damaged chromatid close to its undamaged sister template. Gamma-H2A is removed from the DNA prior to the strand invasion-primer extension step of the repair process and subsequently dephosphorylated by PPH3, a component of the histone H2A phosphatase complex (HTP-C). Dephosphorylation is necessary for efficient recovery from the DNA damage checkpoint. In terms of processing, N-acetylated by NAT4. Post-translationally, acetylated by ESA1, a component of the NuA4 histone acetyltransferase (HAT) complex, to form H2AK4ac and H2AK7ac. Glutamine methylation at Gln-106 (H2AQ105me) by NOP1 is specifically dedicated to polymerase I. It is present at 35S ribosomal DNA locus and impairs binding of the FACT complex. In terms of processing, sumoylated to from H2AK126su. May lead to transcriptional repression.

It is found in the nucleus. It localises to the chromosome. Core component of nucleosome which plays a central role in DNA double strand break (DSB) repair. Nucleosomes wrap and compact DNA into chromatin, limiting DNA accessibility to the cellular machineries which require DNA as a template. Histones thereby play a central role in transcription regulation, DNA repair, DNA replication and chromosomal stability. DNA accessibility is regulated via a complex set of post-translational modifications of histones, also called histone code, and nucleosome remodeling. The protein is Histone H2A.1 (HTA1) of Saccharomyces cerevisiae (strain ATCC 204508 / S288c) (Baker's yeast).